Consider the following 746-residue polypeptide: Polyribonucleotide nucleotidyltransferase (746 aa).

Residues aspartate 515 and aspartate 521 each coordinate Mg(2+). Residues proline 581–isoleucine 640 form the KH domain. The S1 motif domain maps to glycine 652–valine 724.

This sequence belongs to the polyribonucleotide nucleotidyltransferase family. Requires Mg(2+) as cofactor.

The protein resides in the cytoplasm. It carries out the reaction RNA(n+1) + phosphate = RNA(n) + a ribonucleoside 5'-diphosphate. Its function is as follows. Involved in mRNA degradation. Catalyzes the phosphorolysis of single-stranded polyribonucleotides processively in the 3'- to 5'-direction. This Renibacterium salmoninarum (strain ATCC 33209 / DSM 20767 / JCM 11484 / NBRC 15589 / NCIMB 2235) protein is Polyribonucleotide nucleotidyltransferase.